The sequence spans 279 residues: Inorganic pyrophosphatase (279 aa).

Arg100 contributes to the diphosphate binding site. Mg(2+) contacts are provided by Asp132, Asp137, and Asp169.

This sequence belongs to the PPase family. The cofactor is Mg(2+).

It carries out the reaction diphosphate + H2O = 2 phosphate + H(+). This Dictyostelium discoideum (Social amoeba) protein is Inorganic pyrophosphatase (ppa1).